Reading from the N-terminus, the 892-residue chain is UPF0182 protein MCA2716 (892 aa).

Helical transmembrane passes span 7–27, 57–77, 107–127, 163–183, 206–226, 252–272, and 281–301; these read LLTS…AIVL, ILSG…FWAA, GALP…ALPF, ILVL…VMVA, IHLN…YVLQ, LPLI…ALWF, and LALT…IDVV.

The protein belongs to the UPF0182 family.

The protein resides in the cell membrane. The polypeptide is UPF0182 protein MCA2716 (Methylococcus capsulatus (strain ATCC 33009 / NCIMB 11132 / Bath)).